Here is a 378-residue protein sequence, read N- to C-terminus: Glutamate 5-kinase (378 aa).

ATP is bound at residue Lys-20. Residues Ser-60, Asp-147, and Asn-159 each contribute to the substrate site. ATP contacts are provided by residues 179–180 (TD) and 221–227 (TGGMLTK). One can recognise a PUA domain in the interval 286-364 (RGRVVLDDGA…SQIARILGSM (79 aa)).

It belongs to the glutamate 5-kinase family.

The protein localises to the cytoplasm. It catalyses the reaction L-glutamate + ATP = L-glutamyl 5-phosphate + ADP. Its pathway is amino-acid biosynthesis; L-proline biosynthesis; L-glutamate 5-semialdehyde from L-glutamate: step 1/2. Functionally, catalyzes the transfer of a phosphate group to glutamate to form L-glutamate 5-phosphate. This is Glutamate 5-kinase from Bordetella parapertussis (strain 12822 / ATCC BAA-587 / NCTC 13253).